Reading from the N-terminus, the 347-residue chain is UDP-3-O-acylglucosamine N-acyltransferase (347 aa).

His-245 (proton acceptor) is an active-site residue.

The protein belongs to the transferase hexapeptide repeat family. LpxD subfamily. As to quaternary structure, homotrimer.

The catalysed reaction is a UDP-3-O-[(3R)-3-hydroxyacyl]-alpha-D-glucosamine + a (3R)-hydroxyacyl-[ACP] = a UDP-2-N,3-O-bis[(3R)-3-hydroxyacyl]-alpha-D-glucosamine + holo-[ACP] + H(+). It participates in bacterial outer membrane biogenesis; LPS lipid A biosynthesis. Its function is as follows. Catalyzes the N-acylation of UDP-3-O-acylglucosamine using 3-hydroxyacyl-ACP as the acyl donor. Is involved in the biosynthesis of lipid A, a phosphorylated glycolipid that anchors the lipopolysaccharide to the outer membrane of the cell. The chain is UDP-3-O-acylglucosamine N-acyltransferase from Chromohalobacter salexigens (strain ATCC BAA-138 / DSM 3043 / CIP 106854 / NCIMB 13768 / 1H11).